The chain runs to 372 residues: Cobalt-precorrin-5B C(1)-methyltransferase (372 aa).

Belongs to the CbiD family.

It catalyses the reaction Co-precorrin-5B + S-adenosyl-L-methionine = Co-precorrin-6A + S-adenosyl-L-homocysteine. It participates in cofactor biosynthesis; adenosylcobalamin biosynthesis; cob(II)yrinate a,c-diamide from sirohydrochlorin (anaerobic route): step 6/10. Functionally, catalyzes the methylation of C-1 in cobalt-precorrin-5B to form cobalt-precorrin-6A. The polypeptide is Cobalt-precorrin-5B C(1)-methyltransferase (Geobacillus kaustophilus (strain HTA426)).